We begin with the raw amino-acid sequence, 258 residues long: Phosphate import ATP-binding protein PstB (258 aa).

The 243-residue stretch at Ile-5 to Gln-247 folds into the ABC transporter domain. Gly-37–Ser-44 contacts ATP.

The protein belongs to the ABC transporter superfamily. Phosphate importer (TC 3.A.1.7) family. The complex is composed of two ATP-binding proteins (PstB), two transmembrane proteins (PstC and PstA) and a solute-binding protein (PstS).

It localises to the cell membrane. It catalyses the reaction phosphate(out) + ATP + H2O = ADP + 2 phosphate(in) + H(+). Part of the ABC transporter complex PstSACB involved in phosphate import. Responsible for energy coupling to the transport system. The polypeptide is Phosphate import ATP-binding protein PstB (Streptomyces griseus).